We begin with the raw amino-acid sequence, 413 residues long: Alpha-1-antitrypsin 1-4 (413 aa).

The N-terminal stretch at Met-1–Ala-24 is a signal peptide. N-linked (GlcNAc...) asparagine glycosylation is found at Asn-64, Asn-101, and Asn-265. The interval Ala-368 to His-387 is RCL.

Belongs to the serpin family.

The protein resides in the secreted. Its function is as follows. Inhibitor of serine proteases. Can inhibit trypsin and chymotrypsin; relatively ineffective against elastase. This chain is Alpha-1-antitrypsin 1-4 (Serpina1d), found in Mus musculus (Mouse).